We begin with the raw amino-acid sequence, 394 residues long: Myb-related protein 2 (394 aa).

Positions 42–102 constitute an HTH myb-type domain; that stretch reads TDAKPRLKWT…HLQKYRLSKN (61 aa). Residues 73-98 constitute a DNA-binding region (H-T-H motif); the sequence is PKTIMKVMGIPGLTLYHLKSHLQKYR. Positions 148–168 are coiled coil; that stretch reads GEALQMQIEVQRRLHEQLEVQ. Positions 161–166 match the LHEQLE motif; that stretch reads LHEQLE. Positions 338–363 are disordered; the sequence is LHGHKSQHQQGNNEDHKLETRNRKGM. Basic and acidic residues predominate over residues 350-363; the sequence is NEDHKLETRNRKGM.

This sequence belongs to the MYB-CC family. Isoform 1: Homodimer. Isoform 3: Does not form homodimer. As to expression, expressed in phloem and/or cambium.

The protein resides in the nucleus. In terms of biological role, transcriptional activator that may activate the transcription of specific genes involved in nitrogen uptake or assimilation. Acts redundantly with MYR1 as a repressor of flowering and organ elongation under decreased light intensity. Represses gibberellic acid (GA)-dependent responses and affects levels of bioactive GA. This is Myb-related protein 2 from Arabidopsis thaliana (Mouse-ear cress).